The primary structure comprises 521 residues: Glutamyl-tRNA(Gln) amidotransferase subunit A, mitochondrial (521 aa).

Residues Lys-61 and Ser-139 each act as charge relay system in the active site. The active-site Acyl-ester intermediate is Ser-163.

This sequence belongs to the amidase family. GatA subfamily. As to quaternary structure, subunit of the heterotrimeric GatCAB amidotransferase (AdT) complex, composed of A, B and C subunits.

The protein resides in the mitochondrion. The catalysed reaction is L-glutamyl-tRNA(Gln) + L-glutamine + ATP + H2O = L-glutaminyl-tRNA(Gln) + L-glutamate + ADP + phosphate + H(+). Its function is as follows. Allows the formation of correctly charged Gln-tRNA(Gln) through the transamidation of misacylated Glu-tRNA(Gln) in the mitochondria. The reaction takes place in the presence of glutamine and ATP through an activated gamma-phospho-Glu-tRNA(Gln). The protein is Glutamyl-tRNA(Gln) amidotransferase subunit A, mitochondrial of Ajellomyces capsulatus (strain G186AR / H82 / ATCC MYA-2454 / RMSCC 2432) (Darling's disease fungus).